The sequence spans 153 residues: Large ribosomal subunit protein uL15 (153 aa).

The span at Met1–Glu40 shows a compositional bias: basic residues. The interval Met1 to Arg60 is disordered. Positions Gln41–Arg60 are enriched in basic and acidic residues.

This sequence belongs to the universal ribosomal protein uL15 family. As to quaternary structure, part of the 50S ribosomal subunit.

Binds to the 23S rRNA. The polypeptide is Large ribosomal subunit protein uL15 (Halobacterium salinarum (strain ATCC 29341 / DSM 671 / R1)).